The primary structure comprises 265 residues: NAD kinase 2 (265 aa).

Asp51 acts as the Proton acceptor in catalysis. NAD(+)-binding positions include 51–52 (DG), 122–123 (NE), Arg149, Asp151, 162–167 (TAYNKS), and Ala186.

It belongs to the NAD kinase family. A divalent metal cation serves as cofactor.

The protein resides in the cytoplasm. The enzyme catalyses NAD(+) + ATP = ADP + NADP(+) + H(+). In terms of biological role, involved in the regulation of the intracellular balance of NAD and NADP, and is a key enzyme in the biosynthesis of NADP. Catalyzes specifically the phosphorylation on 2'-hydroxyl of the adenosine moiety of NAD to yield NADP. The protein is NAD kinase 2 of Bacillus licheniformis (strain ATCC 14580 / DSM 13 / JCM 2505 / CCUG 7422 / NBRC 12200 / NCIMB 9375 / NCTC 10341 / NRRL NRS-1264 / Gibson 46).